A 311-amino-acid chain; its full sequence is Cell division protein ZipA (311 aa).

The Periplasmic portion of the chain corresponds to 1–5 (MQELR). Residues 6-26 (FVLIVVGALAIMALLFHGLWT) form a helical membrane-spanning segment. Topologically, residues 27 to 311 (SKKEGKAKFG…QIVEFKAANA (285 aa)) are cytoplasmic. Residues 32 to 54 (KAKFGDKPLSKLDLGESEPKESE) are compositionally biased toward basic and acidic residues. Residues 32 to 60 (KAKFGDKPLSKLDLGESEPKESEMYVAPE) form a disordered region.

The protein belongs to the ZipA family. Interacts with FtsZ via their C-terminal domains.

The protein resides in the cell inner membrane. In terms of biological role, essential cell division protein that stabilizes the FtsZ protofilaments by cross-linking them and that serves as a cytoplasmic membrane anchor for the Z ring. Also required for the recruitment to the septal ring of downstream cell division proteins. This chain is Cell division protein ZipA, found in Vibrio vulnificus (strain CMCP6).